The following is a 176-amino-acid chain: NAD(P)H-quinone oxidoreductase subunit 6, chloroplastic (176 aa).

A run of 5 helical transmembrane segments spans residues 10–30 (ILVL…VLLT), 33–53 (IYSA…YFLL), 60–80 (VAQL…AVMF), 95–115 (IGDG…MTTI), and 152–172 (FYLP…GAIT).

The protein belongs to the complex I subunit 6 family. As to quaternary structure, NDH is composed of at least 16 different subunits, 5 of which are encoded in the nucleus.

It localises to the plastid. It is found in the chloroplast thylakoid membrane. It carries out the reaction a plastoquinone + NADH + (n+1) H(+)(in) = a plastoquinol + NAD(+) + n H(+)(out). The catalysed reaction is a plastoquinone + NADPH + (n+1) H(+)(in) = a plastoquinol + NADP(+) + n H(+)(out). In terms of biological role, NDH shuttles electrons from NAD(P)H:plastoquinone, via FMN and iron-sulfur (Fe-S) centers, to quinones in the photosynthetic chain and possibly in a chloroplast respiratory chain. The immediate electron acceptor for the enzyme in this species is believed to be plastoquinone. Couples the redox reaction to proton translocation, and thus conserves the redox energy in a proton gradient. In Zea mays (Maize), this protein is NAD(P)H-quinone oxidoreductase subunit 6, chloroplastic (ndhG).